The following is a 205-amino-acid chain: Histone H1, early embryonic (205 aa).

Disordered regions lie at residues 1 to 21 and 94 to 205; these read MAEK…HPPA and AKAQ…AKSK. In terms of domain architecture, H15 spans 17–91; it reads AHPPAAEMVA…GASGSFKVNV (75 aa). Positions 98 to 124 are enriched in basic and acidic residues; that stretch reads ASEKAKKEKEKAKLLAQREKAKEKGCS. Composition is skewed to basic residues over residues 135–150 and 157–205; these read PKKV…KPVK and EKKK…AKSK.

Belongs to the histone H1/H5 family.

Its subcellular location is the nucleus. The protein localises to the chromosome. Functionally, histones H1 are necessary for the condensation of nucleosome chains into higher-order structures. The sequence is that of Histone H1, early embryonic from Strongylocentrotus purpuratus (Purple sea urchin).